The sequence spans 311 residues: Putative ribose-phosphate pyrophosphokinase 2 (311 aa).

Residues 38–40 (DGE) and 97–98 (RQ) each bind ATP. Mg(2+)-binding residues include H131 and D171. D219 lines the D-ribose 5-phosphate pocket.

The protein belongs to the ribose-phosphate pyrophosphokinase family. Class I subfamily. Homohexamer. Requires Mg(2+) as cofactor.

The protein resides in the cytoplasm. The catalysed reaction is D-ribose 5-phosphate + ATP = 5-phospho-alpha-D-ribose 1-diphosphate + AMP + H(+). The protein operates within metabolic intermediate biosynthesis; 5-phospho-alpha-D-ribose 1-diphosphate biosynthesis; 5-phospho-alpha-D-ribose 1-diphosphate from D-ribose 5-phosphate (route I): step 1/1. Involved in the biosynthesis of the central metabolite phospho-alpha-D-ribosyl-1-pyrophosphate (PRPP) via the transfer of pyrophosphoryl group from ATP to 1-hydroxyl of ribose-5-phosphate (Rib-5-P). This chain is Putative ribose-phosphate pyrophosphokinase 2, found in Listeria monocytogenes serotype 4b (strain F2365).